We begin with the raw amino-acid sequence, 297 residues long: 4-diphosphocytidyl-2-C-methyl-D-erythritol kinase (297 aa).

Catalysis depends on residues lysine 6 and aspartate 144.

The protein belongs to the GHMP kinase family. IspE subfamily.

The enzyme catalyses 4-CDP-2-C-methyl-D-erythritol + ATP = 4-CDP-2-C-methyl-D-erythritol 2-phosphate + ADP + H(+). It participates in isoprenoid biosynthesis; isopentenyl diphosphate biosynthesis via DXP pathway; isopentenyl diphosphate from 1-deoxy-D-xylulose 5-phosphate: step 3/6. In terms of biological role, catalyzes the phosphorylation of the position 2 hydroxy group of 4-diphosphocytidyl-2C-methyl-D-erythritol. The protein is 4-diphosphocytidyl-2-C-methyl-D-erythritol kinase of Leptospira interrogans serogroup Icterohaemorrhagiae serovar Lai (strain 56601).